Here is a 437-residue protein sequence, read N- to C-terminus: Trigger factor (437 aa).

Positions 163 to 248 constitute a PPIase FKBP-type domain; the sequence is SDRVIIDFEG…LNNVSEATLP (86 aa).

It belongs to the FKBP-type PPIase family. Tig subfamily.

The protein resides in the cytoplasm. The catalysed reaction is [protein]-peptidylproline (omega=180) = [protein]-peptidylproline (omega=0). Involved in protein export. Acts as a chaperone by maintaining the newly synthesized protein in an open conformation. Functions as a peptidyl-prolyl cis-trans isomerase. In Neisseria meningitidis serogroup C / serotype 2a (strain ATCC 700532 / DSM 15464 / FAM18), this protein is Trigger factor.